Reading from the N-terminus, the 249-residue chain is ATP-dependent Clp protease proteolytic subunit (249 aa).

The Nucleophile role is filled by S107. H132 is an active-site residue. Positions 212–249 (ESASQDNSLDPDAPDESASQDNSLDPDAPDETRPPKLR) are disordered.

This sequence belongs to the peptidase S14 family. As to quaternary structure, component of the chloroplastic Clp protease core complex.

It is found in the plastid. The protein localises to the chloroplast stroma. The catalysed reaction is Hydrolysis of proteins to small peptides in the presence of ATP and magnesium. alpha-casein is the usual test substrate. In the absence of ATP, only oligopeptides shorter than five residues are hydrolyzed (such as succinyl-Leu-Tyr-|-NHMec, and Leu-Tyr-Leu-|-Tyr-Trp, in which cleavage of the -Tyr-|-Leu- and -Tyr-|-Trp bonds also occurs).. Cleaves peptides in various proteins in a process that requires ATP hydrolysis. Has a chymotrypsin-like activity. Plays a major role in the degradation of misfolded proteins. The sequence is that of ATP-dependent Clp protease proteolytic subunit from Oenothera elata subsp. hookeri (Hooker's evening primrose).